An 893-amino-acid chain; its full sequence is Sperm-associated antigen 1 (893 aa).

Residues Glu-112–Val-126 are compositionally biased toward basic and acidic residues. The disordered stretch occupies residues Glu-112–Lys-155. 3 TPR repeats span residues Ala-213–Ala-246, Thr-247–Asn-279, and Ile-280–Asn-313. Disordered stretches follow at residues Glu-324 to Val-344, Glu-349 to Val-368, and Met-373 to Asn-437. A Phosphoserine modification is found at Ser-351. The segment covering Gln-403–Ser-415 has biased composition (polar residues). The span at Asp-416–Asn-437 shows a compositional bias: basic and acidic residues. TPR repeat units follow at residues Pro-429–Gly-463, Ser-471–Ala-504, Lys-506–Ile-538, Phe-605–Ala-638, and Cys-639–Asn-672. Glu-630 to Lys-637 is a GTP binding site. Position 703 is a phosphoserine (Ser-703). The tract at residues Pro-704 to Gly-756 is disordered. Basic and acidic residues predominate over residues Glu-708–Ile-733. Over residues Gln-734–Pro-744 the composition is skewed to acidic residues. Phosphoserine is present on residues Ser-739, Ser-740, and Ser-758.

Testis and sperm.

Its subcellular location is the cytoplasm. The protein resides in the dynein axonemal particle. May play a role in the cytoplasmic assembly of the ciliary dynein arms. Binds GTP and has GTPase activity. Plays a role in fertilization. This chain is Sperm-associated antigen 1 (Spag1), found in Rattus norvegicus (Rat).